We begin with the raw amino-acid sequence, 57 residues long: Phospholipase A2 superbin b (57 aa).

Ca(2+)-binding residues include Y28, G30, and G32. A disulfide bond links C29 and C45. The active site involves H48. D49 contributes to the Ca(2+) binding site.

Requires Ca(2+) as cofactor. In terms of tissue distribution, expressed by the venom gland.

Its subcellular location is the secreted. The enzyme catalyses a 1,2-diacyl-sn-glycero-3-phosphocholine + H2O = a 1-acyl-sn-glycero-3-phosphocholine + a fatty acid + H(+). Snake venom phospholipase A2 (PLA2) that inhibits collagen-induced platelet aggregation. In terms of inhibition of platelet aggregation, superbin b is more potent as superbin c, and d. PLA2 catalyzes the calcium-dependent hydrolysis of the 2-acyl groups in 3-sn-phosphoglycerides. This chain is Phospholipase A2 superbin b, found in Austrelaps superbus (Lowland copperhead snake).